Consider the following 234-residue polypeptide: 2,3,4,5-tetrahydropyridine-2,6-dicarboxylate N-acetyltransferase (234 aa).

Belongs to the transferase hexapeptide repeat family. DapH subfamily.

It carries out the reaction (S)-2,3,4,5-tetrahydrodipicolinate + acetyl-CoA + H2O = L-2-acetamido-6-oxoheptanedioate + CoA. It participates in amino-acid biosynthesis; L-lysine biosynthesis via DAP pathway; LL-2,6-diaminopimelate from (S)-tetrahydrodipicolinate (acetylase route): step 1/3. Its function is as follows. Catalyzes the transfer of an acetyl group from acetyl-CoA to tetrahydrodipicolinate. The protein is 2,3,4,5-tetrahydropyridine-2,6-dicarboxylate N-acetyltransferase of Lacticaseibacillus casei (strain BL23) (Lactobacillus casei).